A 355-amino-acid chain; its full sequence is Homeobox protein knotted-1-like LET6 (355 aa).

Residues 75–96 are disordered; it reads PFMDNNNNNNPQEDNNSSSSSI. A compositionally biased stretch (low complexity) spans 79–96; that stretch reads NNNNNNPQEDNNSSSSSI. The 21-residue stretch at 237–257 folds into the ELK domain; that stretch reads ELKGQLLRKYSGYLGSLKQEF. A DNA-binding region (homeobox; TALE-type) is located at residues 258–321; that stretch reads MKKRKKGKLP…NQRKRHWKPS (64 aa).

The protein belongs to the TALE/KNOX homeobox family. As to expression, expressed in developing lateral organs and developing ovaries in flowers.

It localises to the nucleus. Functionally, may have a role to play in formative events in ovule and embryo morphogenesis. Probably binds to the DNA sequence 5'-TGAC-3'. This chain is Homeobox protein knotted-1-like LET6 (LET6), found in Solanum lycopersicum (Tomato).